The primary structure comprises 291 residues: N-acetylmannosamine kinase (291 aa).

Residues 5-12 and 132-139 contribute to the ATP site; these read AIDIGGTK and GVGGGVVC. The Zn(2+) site is built by His156, Cys166, Cys168, and Cys173.

It belongs to the ROK (NagC/XylR) family. NanK subfamily. In terms of assembly, homodimer.

The enzyme catalyses an N-acyl-D-mannosamine + ATP = an N-acyl-D-mannosamine 6-phosphate + ADP + H(+). The protein operates within amino-sugar metabolism; N-acetylneuraminate degradation; D-fructose 6-phosphate from N-acetylneuraminate: step 2/5. In terms of biological role, catalyzes the phosphorylation of N-acetylmannosamine (ManNAc) to ManNAc-6-P. This is N-acetylmannosamine kinase from Salmonella arizonae (strain ATCC BAA-731 / CDC346-86 / RSK2980).